The chain runs to 451 residues: UDP-N-acetylmuramoylalanine--D-glutamate ligase (451 aa).

An ATP-binding site is contributed by glycine 119 to threonine 125.

This sequence belongs to the MurCDEF family.

It is found in the cytoplasm. The catalysed reaction is UDP-N-acetyl-alpha-D-muramoyl-L-alanine + D-glutamate + ATP = UDP-N-acetyl-alpha-D-muramoyl-L-alanyl-D-glutamate + ADP + phosphate + H(+). Its pathway is cell wall biogenesis; peptidoglycan biosynthesis. Functionally, cell wall formation. Catalyzes the addition of glutamate to the nucleotide precursor UDP-N-acetylmuramoyl-L-alanine (UMA). The polypeptide is UDP-N-acetylmuramoylalanine--D-glutamate ligase (Streptococcus agalactiae serotype Ia (strain ATCC 27591 / A909 / CDC SS700)).